Here is a 188-residue protein sequence, read N- to C-terminus: MAFPTPAQLTEILQPVAAARGLDIEDVKTTRAGKKSQVIIRIDGDERPSSDLIEELSQEISEIFDAQEEAGTLNFGAGYTLEVSTPGVDFPLSASRHWRRNQGRLVGYALAEEPGTTRVARIGALSEDEESVALITMVKKEVRYQIERLENLSRAVVEIEFAQPSAVELEAAMQTFDFAEQNSATRED.

It belongs to the RimP family.

The protein resides in the cytoplasm. Required for maturation of 30S ribosomal subunits. In Corynebacterium aurimucosum (strain ATCC 700975 / DSM 44827 / CIP 107346 / CN-1) (Corynebacterium nigricans), this protein is Ribosome maturation factor RimP.